A 172-amino-acid polypeptide reads, in one-letter code: RNA silencing suppressor p19 (172 aa).

A compositionally biased stretch (basic and acidic residues) spans Met1–Asp20. The disordered stretch occupies residues Met1–Ser38.

Belongs to the tombusviruses protein p19 family. Homodimer.

Its function is as follows. Acts as a suppressor of RNA-mediated gene silencing, also known as post-transcriptional gene silencing (PTGS), a mechanism of plant viral defense that limits the accumulation of viral RNAs. Binds to short interfering RNAs (siRNAs) with high affinity. Acts as a molecular caliper to specifically select siRNAs based on the length of the duplex region of the RNA. This is RNA silencing suppressor p19 from Capsicum annuum (Capsicum pepper).